The sequence spans 178 residues: Nascent polypeptide-associated complex subunit alpha (178 aa).

An NAC-A/B domain is found at 20–84 (SKNEKKAREL…AKVDDMNKRI (65 aa)). A compositionally biased stretch (low complexity) spans 87-104 (AQAQQEQQEALTKAAADA). Residues 87–142 (AQAQQEQQEALTKAAADAETADKSPESITNDLQNASLEDKTVEEDEGEVDETGLDS) are disordered. Residues 112–122 (ESITNDLQNAS) are compositionally biased toward polar residues. A compositionally biased stretch (acidic residues) spans 127-139 (TVEEDEGEVDETG). In terms of domain architecture, UBA spans 140-178 (LDSKDIEIIVEQTQVSRAKAVKALRAHKGDMVNAIMELS).

It belongs to the NAC-alpha family. In terms of assembly, part of the nascent polypeptide-associated complex (NAC), consisting of EGD2 and EGD1. NAC associates with ribosomes via EGD1.

The protein localises to the cytoplasm. Its subcellular location is the nucleus. Its function is as follows. Component of the nascent polypeptide-associated complex (NAC), a dynamic component of the ribosomal exit tunnel, protecting the emerging polypeptides from interaction with other cytoplasmic proteins to ensure appropriate nascent protein targeting. The NAC complex also promotes mitochondrial protein import by enhancing productive ribosome interactions with the outer mitochondrial membrane and blocks the inappropriate interaction of ribosomes translating non-secretory nascent polypeptides with translocation sites in the membrane of the endoplasmic reticulum. EGD2 may also be involved in transcription regulation. This chain is Nascent polypeptide-associated complex subunit alpha (EGD2), found in Meyerozyma guilliermondii (strain ATCC 6260 / CBS 566 / DSM 6381 / JCM 1539 / NBRC 10279 / NRRL Y-324) (Yeast).